Here is an 89-residue protein sequence, read N- to C-terminus: Microcin N (89 aa).

Residues 1 to 15 (MRELDREELNCVGGA) form the signal peptide.

It belongs to the class IIa microcin family. Post-translationally, mass spectrometry suggests 3 of the 4 Met residues of the mature peptide are oxidized.

It is found in the secreted. Functionally, active against E.coli and Salmonella, but not Listeria or Campylobacter. Channel-forming microcin. Probably neutralized by its immunity protein McnI. This is Microcin N from Escherichia coli.